A 309-amino-acid chain; its full sequence is Putative rhizopine-binding protein (309 aa).

The signal sequence occupies residues M1–A20.

It belongs to the bacterial solute-binding protein 2 family.

The protein localises to the periplasm. In terms of biological role, involved in rhizopine (L-3-O-methyl-scyllo-inosamine) catabolism. Could be involved in its high affinity transport. The protein is Putative rhizopine-binding protein (mocB) of Rhizobium meliloti (Ensifer meliloti).